The chain runs to 172 residues: MKNIVLTGFMGSGKTTIGKLIAEKLDIELIDTDSEVIKEFGMTIDKIFEVHGEKKFREVETKVIERVSKLENVVISTGGGVVLNPENVKLLRENGVIYFLYAPAESILKRLKDDDTRPLLKNGDKLSNIIRLLNMRMPFYKNCDFEINTDILTPELAAEKIISIHLAKESKR.

An ATP-binding site is contributed by 11-16; it reads GSGKTT. Thr-15 is a binding site for Mg(2+). Substrate contacts are provided by Asp-33, Arg-57, and Gly-79. An ATP-binding site is contributed by Arg-117. Arg-136 contacts substrate.

The protein belongs to the shikimate kinase family. As to quaternary structure, monomer. It depends on Mg(2+) as a cofactor.

It localises to the cytoplasm. The catalysed reaction is shikimate + ATP = 3-phosphoshikimate + ADP + H(+). Its pathway is metabolic intermediate biosynthesis; chorismate biosynthesis; chorismate from D-erythrose 4-phosphate and phosphoenolpyruvate: step 5/7. Functionally, catalyzes the specific phosphorylation of the 3-hydroxyl group of shikimic acid using ATP as a cosubstrate. The protein is Shikimate kinase of Caldicellulosiruptor bescii (strain ATCC BAA-1888 / DSM 6725 / KCTC 15123 / Z-1320) (Anaerocellum thermophilum).